Reading from the N-terminus, the 142-residue chain is Transcriptional regulator MraZ (142 aa).

2 SpoVT-AbrB domains span residues 5–47 (THSP…SERE) and 76–119 (ASDE…DAQA).

The protein belongs to the MraZ family. Forms oligomers.

It is found in the cytoplasm. It localises to the nucleoid. The chain is Transcriptional regulator MraZ from Arthrobacter sp. (strain FB24).